We begin with the raw amino-acid sequence, 445 residues long: Zinc finger protein 296 (445 aa).

Residues 1–10 (MSRRKAGRVP) are compositionally biased toward basic residues. A disordered region spans residues 1–20 (MSRRKAGRVPRRVDPDTDTD). A Glycyl lysine isopeptide (Lys-Gly) (interchain with G-Cter in SUMO2) cross-link involves residue Lys-31. The disordered stretch occupies residues 62-88 (SRPLGAPSTCAPRMPLSSKSSDRQPWT). 3 consecutive C2H2-type zinc fingers follow at residues 138–161 (LSCL…QWDH), 212–234 (PTCD…MRSH), and 240–262 (YSCD…KKTH). The disordered stretch occupies residues 256 to 359 (NRHKKTHRQL…TAPRKSHGPG (104 aa)). The segment covering 269–278 (SPSTSASSRG) has biased composition (polar residues). Gly residues predominate over residues 320–332 (PGSGAQGGPGFVG). Residues 338-351 (KVERTDPVKIEKTA) are compositionally biased toward basic and acidic residues. 3 C2H2-type zinc fingers span residues 360-382 (GKCE…RRSH), 388-410 (YTCD…RRTH), and 418-441 (VKCP…RQKH).

The protein belongs to the krueppel C2H2-type zinc-finger protein family. As to quaternary structure, interacts with KLF4. In terms of tissue distribution, strongly expressed in testis and embryonic stem cells.

Its subcellular location is the nucleus. Functionally, may be a transcriptional corepressor with KLF4. The polypeptide is Zinc finger protein 296 (Mus musculus (Mouse)).